A 469-amino-acid chain; its full sequence is 3-isopropylmalate dehydratase large subunit (469 aa).

Positions 350, 410, and 413 each coordinate [4Fe-4S] cluster.

This sequence belongs to the aconitase/IPM isomerase family. LeuC type 1 subfamily. In terms of assembly, heterodimer of LeuC and LeuD. [4Fe-4S] cluster serves as cofactor.

The enzyme catalyses (2R,3S)-3-isopropylmalate = (2S)-2-isopropylmalate. It participates in amino-acid biosynthesis; L-leucine biosynthesis; L-leucine from 3-methyl-2-oxobutanoate: step 2/4. Functionally, catalyzes the isomerization between 2-isopropylmalate and 3-isopropylmalate, via the formation of 2-isopropylmaleate. The sequence is that of 3-isopropylmalate dehydratase large subunit from Rhodopseudomonas palustris (strain TIE-1).